The sequence spans 503 residues: Major facilitator superfamily domain-containing protein 4A (503 aa).

A run of 12 helical transmembrane segments spans residues 19–39, 53–73, 82–102, 105–125, 139–159, 214–234, 289–309, 338–358, 366–386, 392–412, 427–447, and 455–475; these read LTYW…GPTL, ITWV…LGGV, LFLL…IPFC, VGVL…IDTI, AIFL…SPLI, YAFW…FYLI, IWNA…TLFM, GYLP…SIPV, SMLF…LLSQ, MFVG…SMLA, VLVT…GSVM, and FLVC…VLLV. Positions 484-503 are disordered; sequence SEDSACKPPGLDGEATSYQS.

The protein belongs to the major facilitator superfamily.

The protein resides in the membrane. The protein is Major facilitator superfamily domain-containing protein 4A (mfsd4a) of Xenopus tropicalis (Western clawed frog).